The sequence spans 372 residues: DNA/RNA-binding protein ALBA4 (372 aa).

The protein belongs to the histone-like Alba family. In terms of assembly, identified in a TARE6-associated complex consisting of over 30 proteins and including ALBA1, ALBA2 and ALBA4; the complex binds to the non-coding subtelomeric repeat region TARE6.

It is found in the nucleus. The protein resides in the chromosome. The protein localises to the telomere. Its subcellular location is the cytoplasm. Functionally, possesses DNA- and RNA-binding activities. Binds to DNA fragments longer than 14 base pairs with relaxed sequence specificity. Associates with the subtelomeric TARE6 repeats. Regulates the abundance of transcript sub-populations in a stage-specific manner. Regulates activation of male gametocytes. Participates in the coordination of sporozoite development in the oocyst. This chain is DNA/RNA-binding protein ALBA4, found in Plasmodium falciparum (isolate 3D7).